The sequence spans 141 residues: Protein C19orf12 homolog (141 aa).

A helical membrane pass occupies residues 37–57 (GLAFAGGLIGGPLGIAVGGAV).

Belongs to the C19orf12 family.

The protein resides in the mitochondrion. It localises to the mitochondrion membrane. Its subcellular location is the endoplasmic reticulum. It is found in the cytoplasm. The protein localises to the cytosol. In Danio rerio (Zebrafish), this protein is Protein C19orf12 homolog.